The primary structure comprises 194 residues: MSNIKLIVGLANPGEKYAQTRHNAGAWYVQELARVCGATLVADSKYFGLTARVTLHGKDVRLLIPSTFMNLSGKSVGAMANFFRIEADEILVAHDELDMEPGVAKFKLGGGHGGHNGLKDIIASLANNKGFYRLRIGIGHPGDKSQVSNYVLGKAPGTEQAAIEDVIDEAVRSTEVLFNQDMAKAMNRLHAYKA.

Tyr17 contacts tRNA. His22 functions as the Proton acceptor in the catalytic mechanism. TRNA is bound by residues Phe68, Asn70, and Asn116.

Belongs to the PTH family. As to quaternary structure, monomer.

It localises to the cytoplasm. The catalysed reaction is an N-acyl-L-alpha-aminoacyl-tRNA + H2O = an N-acyl-L-amino acid + a tRNA + H(+). Hydrolyzes ribosome-free peptidyl-tRNAs (with 1 or more amino acids incorporated), which drop off the ribosome during protein synthesis, or as a result of ribosome stalling. In terms of biological role, catalyzes the release of premature peptidyl moieties from peptidyl-tRNA molecules trapped in stalled 50S ribosomal subunits, and thus maintains levels of free tRNAs and 50S ribosomes. This Shewanella woodyi (strain ATCC 51908 / MS32) protein is Peptidyl-tRNA hydrolase.